The primary structure comprises 784 residues: DNA repair and recombination protein RAD54-like (784 aa).

The disordered stretch occupies residues 1 to 54 (MRRSLAPSQRGPMRPESRHSFTPPLLKKNKRSCQQELEREQELDRKRQSALRDA). The interval 2–9 (RRSLAPSQ) is required for chromatin remodeling, strand pairing activities and coupling of ATPase activity. Phosphoserine is present on Ser20. Position 22 is a phosphothreonine (Thr22). Over residues 36-47 (ELEREQELDRKR) the composition is skewed to basic and acidic residues. The Helicase ATP-binding domain maps to 172–346 (EGKRGNFNGC…YSLVNFVNPE (175 aa)). ATP is bound at residue 185 to 192 (DEMGLGKT). The short motif at 297–300 (DEGH) is the DEGH box element. Positions 503–660 (LLDFMLAAIR…NNESAEKHFT (158 aa)) constitute a Helicase C-terminal domain. The tract at residues 751–784 (EEAASEQPEEKPDRRKRPSTPPSDDSADEDFLGF) is disordered. Residues 775-784 (DSADEDFLGF) show a composition bias toward acidic residues.

This sequence belongs to the SNF2/RAD54 helicase family. Interacts (via N-terminus) with spn-A/Rad51.

It localises to the nucleus. Involved in mitotic DNA repair and meiotic recombination. Functions in the recombinational DNA repair pathway. Essential for interhomolog gene conversion (GC), but may have a less important role in intersister GC than spn-A/Rad51. In the presence of DNA, spn-A/Rad51 enhances the ATPase activity of okr/Rad54. The polypeptide is DNA repair and recombination protein RAD54-like (Drosophila yakuba (Fruit fly)).